The sequence spans 91 residues: Small ribosomal subunit protein uS19 (91 aa).

Belongs to the universal ribosomal protein uS19 family.

Its function is as follows. Protein S19 forms a complex with S13 that binds strongly to the 16S ribosomal RNA. The chain is Small ribosomal subunit protein uS19 from Synechococcus sp. (strain CC9605).